We begin with the raw amino-acid sequence, 809 residues long: Quinate/shikimate dehydrogenase (quinone) (809 aa).

5 helical membrane-spanning segments follow: residues 14–34 (VWCF…VIGG), 41–61 (GGSW…FFMF), 68–88 (VWLY…DAGF), 90–110 (FWPL…VMLT), and 127–147 (AYVI…GMFI).

It belongs to the bacterial PQQ dehydrogenase family. The cofactor is pyrroloquinoline quinone.

Its subcellular location is the cell membrane. It carries out the reaction L-quinate + a quinone = 3-dehydroquinate + a quinol. It catalyses the reaction shikimate + a quinone = 3-dehydroshikimate + a quinol. It participates in aromatic compound metabolism; 3,4-dihydroxybenzoate biosynthesis; 3-dehydroquinate from D-quinate (PQQ route): step 1/1. Functionally, can act either on quinate or on shikimate. This is Quinate/shikimate dehydrogenase (quinone) (quiA) from Acinetobacter baylyi (strain ATCC 33305 / BD413 / ADP1).